Reading from the N-terminus, the 536-residue chain is Phosphoenolpyruvate carboxykinase (ATP) (536 aa).

Residues R61, Y195, and K201 each contribute to the substrate site. Residues K201, H220, and 236 to 244 (GLSGTGKTT) each bind ATP. K201 and H220 together coordinate Mn(2+). Residue D257 participates in Mn(2+) binding. The ATP site is built by E285, R323, and T448. R323 provides a ligand contact to substrate.

This sequence belongs to the phosphoenolpyruvate carboxykinase (ATP) family. Requires Mn(2+) as cofactor.

It localises to the cytoplasm. The enzyme catalyses oxaloacetate + ATP = phosphoenolpyruvate + ADP + CO2. It functions in the pathway carbohydrate biosynthesis; gluconeogenesis. Involved in the gluconeogenesis. Catalyzes the conversion of oxaloacetate (OAA) to phosphoenolpyruvate (PEP) through direct phosphoryl transfer between the nucleoside triphosphate and OAA. This chain is Phosphoenolpyruvate carboxykinase (ATP), found in Methylobacterium nodulans (strain LMG 21967 / CNCM I-2342 / ORS 2060).